A 224-amino-acid polypeptide reads, in one-letter code: Urease accessory protein UreG (224 aa).

Basic residues predominate over residues 1–20 (MATHSHPHSHTVPARPRRVR). The tract at residues 1-25 (MATHSHPHSHTVPARPRRVRKPGEP) is disordered. 32–39 (GPVGSGKT) provides a ligand contact to GTP.

It belongs to the SIMIBI class G3E GTPase family. UreG subfamily. Homodimer. UreD, UreF and UreG form a complex that acts as a GTP-hydrolysis-dependent molecular chaperone, activating the urease apoprotein by helping to assemble the nickel containing metallocenter of UreC. The UreE protein probably delivers the nickel.

The protein localises to the cytoplasm. In terms of biological role, facilitates the functional incorporation of the urease nickel metallocenter. This process requires GTP hydrolysis, probably effectuated by UreG. In Mycobacterium bovis (strain ATCC BAA-935 / AF2122/97), this protein is Urease accessory protein UreG.